Reading from the N-terminus, the 303-residue chain is MTPQDLKNVMSSGLLSFPITDFHDNGDFNAKGYAERLEWLAPFGASALFAAGGTGEYFSLTASEYPQIIQTAVNTCRGKVPIIAGAGGPTRFAIECAQAAEKAGAHGILLMPHYMTEASQEGLAAHVEAVCKSVNFGVIIYNRGITRYTPETVARLCERNPNLVGFKDGVGDIEGMASMFLAMGDRLAYLGGLPTAEVYAAAYKALGTPVYSSAVFNFIPKTAMRFYEAVKNDDQATQHQLLKDFFMPYLKIRNRSAGYAVSIIKAGAKIVGHPAGPVRAPLADLQAEEIEMLAELIRKVEPV.

It belongs to the DapA family.

The enzyme catalyses 5-dehydro-4-deoxy-D-glucarate + H(+) = 2,5-dioxopentanoate + CO2 + H2O. Its pathway is carbohydrate acid metabolism; D-glucarate degradation; 2,5-dioxopentanoate from D-glucarate: step 2/2. The polypeptide is Probable 5-dehydro-4-deoxyglucarate dehydratase (Acidovorax ebreus (strain TPSY) (Diaphorobacter sp. (strain TPSY))).